A 236-amino-acid chain; its full sequence is Ribose-5-phosphate isomerase A (236 aa).

Substrate is bound by residues 29–32 (SGST), 86–89 (DGAD), and 99–102 (KGGG). Catalysis depends on Glu108, which acts as the Proton acceptor. Lys126 provides a ligand contact to substrate.

This sequence belongs to the ribose 5-phosphate isomerase family. As to quaternary structure, homodimer.

The enzyme catalyses aldehydo-D-ribose 5-phosphate = D-ribulose 5-phosphate. It participates in carbohydrate degradation; pentose phosphate pathway; D-ribose 5-phosphate from D-ribulose 5-phosphate (non-oxidative stage): step 1/1. Its function is as follows. Catalyzes the reversible conversion of ribose-5-phosphate to ribulose 5-phosphate. This chain is Ribose-5-phosphate isomerase A, found in Prochlorococcus marinus (strain NATL1A).